The sequence spans 362 residues: Ferredoxin--NADP reductase, leaf isozyme 1, chloroplastic (362 aa).

The transit peptide at 1–36 (MAAVTAAAVSTSAAAAVTKASPSPAHCFLPCPPRTR) directs the protein to the chloroplast. The region spanning 83–205 (KEPYVGKCLL…TGPVGKEMLM (123 aa)) is the FAD-binding FR-type domain. FAD contacts are provided by residues 141 to 144 (RLYS), 162 to 164 (CVK), Tyr168, 179 to 181 (VCS), and Thr220. 2 residues coordinate NADP(+): Ser144 and Lys164. A disulfide bond links Cys180 and Cys185. Phosphoserine is present on Ser181. NADP(+) contacts are provided by residues Thr220, 252 to 253 (VP), 282 to 283 (SR), Lys292, 321 to 322 (GL), and Glu360.

This sequence belongs to the ferredoxin--NADP reductase type 1 family. As to quaternary structure, heterodimer with LFNR2. Component of high molecular weight thylakoid LFNRs-containing protein complexes containing LIR1, LFNR1, LFNR2, TIC62 and TROL proteins. Interacts directly with LFNR1 and LFNR2; LIR1 increases the affinity of LFNR1 and LFNR2 for TIC62 and subsequent thylakoid relocalization. Requires FAD as cofactor. May form interchain disulfide bonds with LIR1.

It is found in the plastid. The protein localises to the chloroplast stroma. It localises to the chloroplast thylakoid membrane. The enzyme catalyses 2 reduced [2Fe-2S]-[ferredoxin] + NADP(+) + H(+) = 2 oxidized [2Fe-2S]-[ferredoxin] + NADPH. Its pathway is energy metabolism; photosynthesis. In terms of biological role, plays a key role in regulating the relative amounts of cyclic and non-cyclic electron flow to meet the demands of the plant for ATP and reducing power. The chain is Ferredoxin--NADP reductase, leaf isozyme 1, chloroplastic from Oryza sativa subsp. indica (Rice).